A 2013-amino-acid chain; its full sequence is Centrosomal protein 224 (2013 aa).

HEAT repeat units lie at residues 115–153, 158–196, 200–238, 348–386, and 427–465; these read TIEA…ALKT, QIPV…WIGK, PLIS…EAAK, TSYV…KSIS, and TKVT…IIGE. A disordered region spans residues 512–557; it reads PVSSSNKKPAAATGNSKSSSTTTPTGRSSNSSPLPPPPSSSDDIKN. Residues 524–543 show a composition bias toward low complexity; the sequence is TGNSKSSSTTTPTGRSSNSS. HEAT repeat units follow at residues 724 to 762, 816 to 854, 857 to 895, 899 to 937, and 977 to 1015; these read IQQL…NIGA, VDIS…DANR, QPKL…AMGG, EKHA…SDLG, and PSEI…QIPL. Residues 1043–1109 are disordered; it reads KTGQPIPPPS…QQQQRRSILQ (67 aa). The segment covering 1053 to 1106 has biased composition (low complexity); it reads KTKQSTSSSSSSSSTTSQQSSTPSSPQPIRQQQQQQQQQPTQPQQQQQQQQRRS. HEAT repeat units lie at residues 1240–1279, 1281–1314, and 1317–1353; these read EYEA…LCLP, VLFR…KNGA, and CGNL…HIKD. Composition is skewed to low complexity over residues 1372–1406, 1695–1735, and 1746–1796; these read NNNN…QQQQ, NRIS…INSS, and SNNT…TLST. Disordered regions lie at residues 1372–1413, 1695–1809, 1905–1949, and 1966–1995; these read NNNN…SLST, NRIS…YSGK, NQPS…IAPQ, and TLNP…DLNS. Residues 1799–1809 show a composition bias toward basic and acidic residues; it reads INKEPRDYSGK. The span at 1913-1939 shows a compositional bias: low complexity; it reads NNNNNNNNNNNNNNNNNINNNNNNNNN. Residues 1940 to 1949 show a composition bias toward polar residues; the sequence is SGGNENIAPQ. The span at 1967-1995 shows a compositional bias: low complexity; the sequence is LNPDQNSGSNNNNSHQNSPSTSSSNDLNS.

It belongs to the TOG/XMAP215 family. As to quaternary structure, interacts with eb1 at the microtubule tip, centrosome and kinetochore. Interacts with lis1 in the cortical attachment of microtubules.

Its subcellular location is the cytoplasm. It localises to the cytoskeleton. The protein localises to the microtubule organizing center. It is found in the centrosome. The protein resides in the chromosome. Its subcellular location is the centromere. It localises to the kinetochore. Its function is as follows. Involved in regulation of microtubule dynamics. Regulates the interaction of microtubules tips with the centrosome and cell cortex. In Dictyostelium discoideum (Social amoeba), this protein is Centrosomal protein 224 (mtaA).